The chain runs to 147 residues: Fluoride-specific ion channel FluC 1 (147 aa).

4 helical membrane-spanning segments follow: residues 29–49 (YVYIFIGGALGALLRYLISFL), 61–81 (IANLTGAFVMGLLTALTIAFF), 90–110 (AITTGFLGALTTFSTFQLELI), and 118–138 (FITLLLYAVTSYVFGILLCYV). Residues glycine 97 and threonine 100 each coordinate Na(+).

This sequence belongs to the fluoride channel Fluc/FEX (TC 1.A.43) family.

It is found in the cell membrane. It catalyses the reaction fluoride(in) = fluoride(out). With respect to regulation, na(+) is not transported, but it plays an essential structural role and its presence is essential for fluoride channel function. Its function is as follows. Fluoride-specific ion channel. Important for reducing fluoride concentration in the cell, thus reducing its toxicity. This is Fluoride-specific ion channel FluC 1 from Staphylococcus aureus (strain MRSA252).